We begin with the raw amino-acid sequence, 464 residues long: ATP-dependent protease ATPase subunit HslU (464 aa).

ATP is bound by residues Val18, 60–65 (GVGKTE), Asp277, Glu342, and Arg414.

The protein belongs to the ClpX chaperone family. HslU subfamily. As to quaternary structure, a double ring-shaped homohexamer of HslV is capped on each side by a ring-shaped HslU homohexamer. The assembly of the HslU/HslV complex is dependent on binding of ATP.

Its subcellular location is the cytoplasm. Its function is as follows. ATPase subunit of a proteasome-like degradation complex; this subunit has chaperone activity. The binding of ATP and its subsequent hydrolysis by HslU are essential for unfolding of protein substrates subsequently hydrolyzed by HslV. HslU recognizes the N-terminal part of its protein substrates and unfolds these before they are guided to HslV for hydrolysis. The polypeptide is ATP-dependent protease ATPase subunit HslU (Lactobacillus leichmannii).